A 391-amino-acid chain; its full sequence is Tyrosinase-like protein phomQ2 (391 aa).

Residues 1 to 21 (MDNVGCEASSSRDPKGKKAVG) are disordered. Residues 61-81 (IRGFICATIIFVVCLGALSYI) form a helical membrane-spanning segment. Asn97 and Asn141 each carry an N-linked (GlcNAc...) asparagine glycan. Cu cation contacts are provided by His160 and His169. 3 N-linked (GlcNAc...) asparagine glycosylation sites follow: Asn204, Asn246, and Asn261. 2 residues coordinate Cu cation: His298 and His324. Residue Asn353 is glycosylated (N-linked (GlcNAc...) asparagine).

Belongs to the tyrosinase family. Cu(2+) serves as cofactor.

The protein localises to the membrane. It functions in the pathway mycotoxin biosynthesis. In terms of biological role, tyrosinase-like protein; part of the gene cluster that mediates the biosynthesis of the phomopsins, a group of hexapeptide mycotoxins which infects lupins and causes lupinosis disease in livestock. Within the pathway, phomQ2 is involved in the generation of the common 13-membered macrocycle, possibly by catalyzing the hydroxylation of Tyr. The pathway starts with the processing of the precursor phomA by several endopeptidases including kexin proteases as well as the cluster-specific S41 family peptidase phomP1 and the oligopeptidase phomG to produce 10 identical copies of the hexapeptide Tyr-Val-Ile-Pro-Ile-Asp. After being excised from the precursor peptide, the core peptides are cyclized and modified post-translationally by enzymes encoded within the gene cluster. The timing and order of proteolysis of the phomA precursor and PTMs are still unknown. Two tyrosinase-like enzymes, phomQ1 and phomQ2, catalyze the chlorination and hydroxylation of Tyr, respectively. PhomYb, is proposed to be involved in the construction of the macrocyclic structure. The other 4 ustYa family proteins may be involved in PTMs that generate the unique structure of phomopsin A. PhomYa is required for the hydroxylation of C-beta of Tyr. PhomYc, phomYd, and phomYe are responsible for the biosynthesis of 2,3-dehydroisoleucine (dIle), 2,3-dehydroaspartic acid (dAsp), and 3,4-dehydroproline (dPro), respectively. While dIle formation by phomYc is indispensable for the installation of dAsp by phomYd, the order of the other PTMs have not been elucidated yet. Most of the biosynthetic enzymes likely have broad substrate specificity, and thus, there might be a metabolic grid from a precursor to phomopsin A. The enzyme(s) responsible for the biosynthesis of 3,4-dehydrovaline (dVal) have also not been identified yet. Finally, phomM acts as an S-adenosylmethionine-dependent alpha-N-methyltransferase that catalyzes two successive N-methylation reactions, converting N-desmethyl-phomopsin A to phomopsin A and phomopsin A further to an N,N-dimethylated congener called phomopsin E. The sequence is that of Tyrosinase-like protein phomQ2 from Diaporthe leptostromiformis (Lupinosis disease fungus).